A 155-amino-acid chain; its full sequence is Movement protein TGB3 (155 aa).

Topologically, residues 1–59 (MAMPHPLECCCPQCLPSSESFPIYGEQEIPCSETQAETTPVEKTVRANVLTDILDDHYY) are cytoplasmic. The helical transmembrane segment at 60–80 (AILASLFIIALWLLYIYLSSI) threads the bilayer. Residues 81-130 (PTETGPYFYQDLNSVKIYGIGATNPEVIAAIHHWQKYPFGESPMWGGLIS) are Lumenal-facing. Residues 89–93 (YQDLN) carry the Involved in plasmodesmata targeting and virus cell-to-cell movement motif. A helical transmembrane segment spans residues 131 to 151 (VLSILLKPLTLVFALSFFLLL). The segment at 150–155 (LLSSKR) is required for attachment to the host plasmodesmata-associated membrane compartments. The Cytoplasmic segment spans residues 152–155 (SSKR).

This sequence belongs to the virgaviridae TGB3 movement protein family. In terms of assembly, interacts with movement proteins TGB1 and TGB2. TGB1-TGB3-TGB2 complex formation is enhanced by ATP hydrolysis.

The protein localises to the host cell junction. The protein resides in the host plasmodesma. It localises to the host endoplasmic reticulum membrane. It is found in the host cytoplasm. Its subcellular location is the host cytoskeleton. Functionally, participates in the transport of viral genome to neighboring plant cells directly through plasmodesmata, without any budding. TGBp2 and TGBp3 are necessary for intracellular delivery of TGBp1-containing vRNPs to plasmodesmata. Can gate plasmodesmata and increase their size exclusion limit. Induces host actin cytoskeleton network thickening, which probably plays a major role in virus cell-to-cell movement. The sequence is that of Movement protein TGB3 from Hordeum vulgare (Barley).